The sequence spans 156 residues: MNMNATILGQAIAFVIFVWFCMKYVWPPLMAAIEKRQKEISDGLASAERAKKDLDLAQANATDQLKKAKAEAQVIIEQANKRRSQILDEAKAEAEQERTKIVAQAQAEIDAERKRAREELRKQVAILAVAGAEKIIERSVDEAANSDIVDKLVAEL.

A helical transmembrane segment spans residues A11–A31.

Belongs to the ATPase B chain family. F-type ATPases have 2 components, F(1) - the catalytic core - and F(0) - the membrane proton channel. F(1) has five subunits: alpha(3), beta(3), gamma(1), delta(1), epsilon(1). F(0) has three main subunits: a(1), b(2) and c(10-14). The alpha and beta chains form an alternating ring which encloses part of the gamma chain. F(1) is attached to F(0) by a central stalk formed by the gamma and epsilon chains, while a peripheral stalk is formed by the delta and b chains.

The protein localises to the cell inner membrane. Functionally, f(1)F(0) ATP synthase produces ATP from ADP in the presence of a proton or sodium gradient. F-type ATPases consist of two structural domains, F(1) containing the extramembraneous catalytic core and F(0) containing the membrane proton channel, linked together by a central stalk and a peripheral stalk. During catalysis, ATP synthesis in the catalytic domain of F(1) is coupled via a rotary mechanism of the central stalk subunits to proton translocation. Component of the F(0) channel, it forms part of the peripheral stalk, linking F(1) to F(0). The chain is ATP synthase subunit b from Klebsiella pneumoniae (strain 342).